The chain runs to 195 residues: Interferon omega-1 (195 aa).

Residues 1–23 (MAFSVSSLMALVVISSSPVSSMS) form the signal peptide. 2 cysteine pairs are disulfide-bonded: Cys-24/Cys-122 and Cys-52/Cys-162. Asn-101 carries N-linked (GlcNAc...) asparagine glycosylation.

Belongs to the alpha/beta interferon family.

The protein resides in the secreted. The chain is Interferon omega-1 from Equus caballus (Horse).